The following is a 339-amino-acid chain: Large ribosomal subunit protein uL10 (339 aa).

A disordered region spans residues 300–339 (AAAQATPSVEEREEEEKPEEEEEEEEKEEEAIEGLGALFG). The segment covering 310 to 331 (EREEEEKPEEEEEEEEKEEEAI) has biased composition (acidic residues).

Belongs to the universal ribosomal protein uL10 family. In terms of assembly, part of the 50S ribosomal subunit. Forms part of the ribosomal stalk which helps the ribosome interact with GTP-bound translation factors. Forms a heptameric L10(L12)2(L12)2(L12)2 complex, where L10 forms an elongated spine to which the L12 dimers bind in a sequential fashion.

Functionally, forms part of the ribosomal stalk, playing a central role in the interaction of the ribosome with GTP-bound translation factors. This is Large ribosomal subunit protein uL10 from Archaeoglobus fulgidus (strain ATCC 49558 / DSM 4304 / JCM 9628 / NBRC 100126 / VC-16).